The sequence spans 484 residues: MTTGVQTLKNYIGGQWVESRSGKTEAVPNPATGEVLAYVPISSREELDEAVRAAKEAFKTWRKTPVPRRARILFKYQQLLVEHWEELARLVTLENGKSYNEAYGEVQRGIECVEFAAGAPTLMMGRQLPDIATGIESGMYRYPIGVVGGITPFNFPMMVPCWMFPLAIACGNTFVLKPSERTPMLANRLAELFKEAGLPDGVLNIVHGAHDVVNGLLEHPDVKAISFVGSQPVGEYVYKTAAAHGKRVQALTGAKNHSIVMPDADLNVAVREIINAAFGSAGERCMAASVVVAVGEIADELVEKLVAAANELKIGNGLEESVFLGPVIREAHKQRTVKYIELGEKEGAILVRDGRKDAAVQDNGYFIGPTIFDRVTTDMTIWKDEIFAPVLSIVRVETLDEAIEVANKSPFANGACIYTRDGGNVRKFREEIDAGMLGVNLGVPAPMAFFPFSGWKNSFYGDLHANGMDGVEFYTRKKMMTSRW.

Phe153, Lys177, Glu180, Arg181, Ser230, and Thr252 together coordinate NAD(+). Cys285 acts as the Nucleophile in catalysis. Glu385 is an NAD(+) binding site.

The protein belongs to the aldehyde dehydrogenase family. IolA subfamily. In terms of assembly, homotetramer.

It carries out the reaction 3-oxopropanoate + NAD(+) + CoA + H2O = hydrogencarbonate + acetyl-CoA + NADH + H(+). The catalysed reaction is 2-methyl-3-oxopropanoate + NAD(+) + CoA + H2O = propanoyl-CoA + hydrogencarbonate + NADH + H(+). It participates in polyol metabolism; myo-inositol degradation into acetyl-CoA; acetyl-CoA from myo-inositol: step 7/7. Functionally, catalyzes the oxidation of malonate semialdehyde (MSA) and methylmalonate semialdehyde (MMSA) into acetyl-CoA and propanoyl-CoA, respectively. Is involved in a myo-inositol catabolic pathway. Bicarbonate, and not CO2, is the end-product of the enzymatic reaction. The polypeptide is Malonate-semialdehyde dehydrogenase 2 (Geobacillus kaustophilus (strain HTA426)).